The primary structure comprises 152 residues: Protein-export protein SecB (152 aa).

This sequence belongs to the SecB family. In terms of assembly, homotetramer, a dimer of dimers. One homotetramer interacts with 1 SecA dimer.

It is found in the cytoplasm. One of the proteins required for the normal export of preproteins out of the cell cytoplasm. It is a molecular chaperone that binds to a subset of precursor proteins, maintaining them in a translocation-competent state. It also specifically binds to its receptor SecA. This Rickettsia bellii (strain RML369-C) protein is Protein-export protein SecB.